Reading from the N-terminus, the 224-residue chain is Phosphoglycolate phosphatase (224 aa).

Asp-11 serves as the catalytic Nucleophile. Mg(2+) is bound by residues Asp-11, Asp-13, and Asp-177.

Belongs to the HAD-like hydrolase superfamily. CbbY/CbbZ/Gph/YieH family. It depends on Mg(2+) as a cofactor.

It catalyses the reaction 2-phosphoglycolate + H2O = glycolate + phosphate. The protein operates within organic acid metabolism; glycolate biosynthesis; glycolate from 2-phosphoglycolate: step 1/1. Functionally, specifically catalyzes the dephosphorylation of 2-phosphoglycolate. Is involved in the dissimilation of the intracellular 2-phosphoglycolate formed during the DNA repair of 3'-phosphoglycolate ends, a major class of DNA lesions induced by oxidative stress. This chain is Phosphoglycolate phosphatase, found in Haemophilus influenzae (strain ATCC 51907 / DSM 11121 / KW20 / Rd).